The sequence spans 151 residues: Large ribosomal subunit protein uL13 (151 aa).

A disordered region spans residues 129–151; it reads PTHPHDAQKPKELNINTIPGAES. The span at 131–140 shows a compositional bias: basic and acidic residues; sequence HPHDAQKPKE.

The protein belongs to the universal ribosomal protein uL13 family. Part of the 50S ribosomal subunit.

Functionally, this protein is one of the early assembly proteins of the 50S ribosomal subunit, although it is not seen to bind rRNA by itself. It is important during the early stages of 50S assembly. The polypeptide is Large ribosomal subunit protein uL13 (Trichormus variabilis (strain ATCC 29413 / PCC 7937) (Anabaena variabilis)).